The chain runs to 494 residues: Glucose-6-phosphate 1-dehydrogenase (494 aa).

Residues arginine 46 and lysine 150 each contribute to the NADP(+) site. Histidine 180, lysine 184, glutamate 218, and aspartate 237 together coordinate substrate. The active-site Proton acceptor is the histidine 242. Residue lysine 342 participates in substrate binding.

Belongs to the glucose-6-phosphate dehydrogenase family.

It catalyses the reaction D-glucose 6-phosphate + NADP(+) = 6-phospho-D-glucono-1,5-lactone + NADPH + H(+). The protein operates within carbohydrate degradation; pentose phosphate pathway; D-ribulose 5-phosphate from D-glucose 6-phosphate (oxidative stage): step 1/3. Catalyzes the oxidation of glucose 6-phosphate to 6-phosphogluconolactone. This Aggregatibacter actinomycetemcomitans (Actinobacillus actinomycetemcomitans) protein is Glucose-6-phosphate 1-dehydrogenase.